The chain runs to 190 residues: Elongation factor P-like protein (190 aa).

This sequence belongs to the elongation factor P family.

The sequence is that of Elongation factor P-like protein from Klebsiella pneumoniae subsp. pneumoniae (strain ATCC 700721 / MGH 78578).